The following is a 97-amino-acid chain: U-scoloptoxin(10)-Sa2a (97 aa).

The N-terminal stretch at 1 to 23 is a signal peptide; that stretch reads MNKSMLIFFTILFLTYIIEEKEA.

Belongs to the scoloptoxin-10 family. Contains 3 disulfide bonds. In terms of tissue distribution, expressed by the venom gland.

It localises to the secreted. This Scolopendra alternans (Florida Keys giant centipede) protein is U-scoloptoxin(10)-Sa2a.